The primary structure comprises 61 residues: Small ribosomal subunit protein uS14B (61 aa).

Zn(2+)-binding residues include Cys24, Cys27, Cys40, and Cys43.

This sequence belongs to the universal ribosomal protein uS14 family. Zinc-binding uS14 subfamily. In terms of assembly, part of the 30S ribosomal subunit. Contacts proteins S3 and S10. The cofactor is Zn(2+).

In terms of biological role, binds 16S rRNA, required for the assembly of 30S particles and may also be responsible for determining the conformation of the 16S rRNA at the A site. The polypeptide is Small ribosomal subunit protein uS14B (Mycolicibacterium gilvum (strain PYR-GCK) (Mycobacterium gilvum (strain PYR-GCK))).